We begin with the raw amino-acid sequence, 59 residues long: UPF0181 protein YoaH (59 aa).

Belongs to the UPF0181 family.

This chain is UPF0181 protein YoaH, found in Escherichia coli O127:H6 (strain E2348/69 / EPEC).